A 281-amino-acid chain; its full sequence is Pantothenate synthetase (281 aa).

ATP is bound at residue 30 to 37; sequence MGYLHEGH. The Proton donor role is filled by His37. Gln60 contributes to the (R)-pantoate binding site. Beta-alanine is bound at residue Gln60. Residue 146-149 participates in ATP binding; that stretch reads GEKD. A (R)-pantoate-binding site is contributed by Gln152. ATP-binding positions include Ile175 and 183-186; that span reads KSSR.

It belongs to the pantothenate synthetase family. As to quaternary structure, homodimer.

It is found in the cytoplasm. It catalyses the reaction (R)-pantoate + beta-alanine + ATP = (R)-pantothenate + AMP + diphosphate + H(+). The protein operates within cofactor biosynthesis; (R)-pantothenate biosynthesis; (R)-pantothenate from (R)-pantoate and beta-alanine: step 1/1. In terms of biological role, catalyzes the condensation of pantoate with beta-alanine in an ATP-dependent reaction via a pantoyl-adenylate intermediate. This is Pantothenate synthetase from Ruminiclostridium cellulolyticum (strain ATCC 35319 / DSM 5812 / JCM 6584 / H10) (Clostridium cellulolyticum).